A 321-amino-acid polypeptide reads, in one-letter code: Serine/threonine-protein phosphatase PP1 isozyme 4 (321 aa).

An N-acetylalanine modification is found at alanine 2. Positions 74, 76, 102, and 134 each coordinate Mn(2+). The Proton donor role is filled by histidine 135. Histidine 183 and histidine 258 together coordinate Mn(2+).

It belongs to the PPP phosphatase family. PP-1 subfamily. In terms of assembly, interacts with the DELLA proteins RGA and GAI. Interacts with PIF3 and PIF5. Interacts with the auxin efflux carrier PIN1. Mn(2+) is required as a cofactor. As to expression, expressed in the vasculature of roots and cotyledons, tips of leaves, guard cells, bases of trichomes, pistils and stamen filaments.

It is found in the nucleus. Its subcellular location is the cytoplasm. It carries out the reaction O-phospho-L-seryl-[protein] + H2O = L-seryl-[protein] + phosphate. The catalysed reaction is O-phospho-L-threonyl-[protein] + H2O = L-threonyl-[protein] + phosphate. Its activity is regulated as follows. Phosphatase activity is strongly reduced by the protein phosphatase inhibitor 2 (I-2). Serine/threonine-protein phosphatase that possesses phosphatase activity toward para-nitrophenyl phosphate (pNPP) in vitro. Acts as a positive regulator in the gibberellin (GA) signaling pathway to regulate plant growth and development. Promotes the GA-induced and proteasomal-dependent degradation of the DELLA proteins RGA and GAI by directly binding and dephosphorylating these proteins. Involved in the regulation of phytochrome B (phyB) signaling pathway that controls photomorphogenesis. Promotes the proteasomal-dependent degradation of PIF5 factor by directly binding and dephosphorylating this protein. Involved in the regulation of pavement cell (PC) interdigitation by modulating the auxin efflux carrier PIN1 polarity and endocytic trafficking. Regulates PIN1 polar targeting through direct binding and dephosphorylation. Acts antagonistically with PID in regulating PC development. The sequence is that of Serine/threonine-protein phosphatase PP1 isozyme 4 from Arabidopsis thaliana (Mouse-ear cress).